The sequence spans 186 residues: uncharacterized protein (186 aa).

This is an uncharacterized protein from Acanthamoeba polyphaga mimivirus (APMV).